A 439-amino-acid chain; its full sequence is Proline--tRNA ligase (439 aa).

It belongs to the class-II aminoacyl-tRNA synthetase family. ProS type 2 subfamily. As to quaternary structure, homodimer.

It is found in the cytoplasm. The catalysed reaction is tRNA(Pro) + L-proline + ATP = L-prolyl-tRNA(Pro) + AMP + diphosphate. Its function is as follows. Catalyzes the attachment of proline to tRNA(Pro) in a two-step reaction: proline is first activated by ATP to form Pro-AMP and then transferred to the acceptor end of tRNA(Pro). This is Proline--tRNA ligase from Rhodopseudomonas palustris (strain HaA2).